A 1044-amino-acid polypeptide reads, in one-letter code: Integrin alpha-V (1044 aa).

The first 30 residues, 1-30 (MAAPGRLLLRPRPGGLLLLLPGLLLPLADA), serve as a signal peptide directing secretion. The Extracellular portion of the chain corresponds to 31 to 988 (FNLDVESPAE…WGIQPAPMPV (958 aa)). FG-GAP repeat units lie at residues 32–98 (NLDV…RRCQ), 109–170 (DYAK…VEYA), 173–225 (RSKN…ISKY), 237–291 (QLAT…GKNM), 292–357 (SSLH…GDFQ), 358–415 (TTKL…GLNS), and 419–482 (QILE…VYPS). N-linked (GlcNAc...) asparagine glycosylation is present at Asn-74. Cystine bridges form between Cys-89–Cys-97, Cys-138–Cys-158, and Cys-172–Cys-185. Residues Asp-260, Asn-262, Asp-264, Ile-266, and Asp-268 each contribute to the Ca(2+) site. Asn-290 and Asn-296 each carry an N-linked (GlcNAc...) asparagine glycan. The Ca(2+) site is built by Asp-314, Asn-316, Asp-318, Tyr-320, Asp-322, Asp-379, Asp-381, Asp-383, Phe-385, Asp-387, Asp-443, Asp-445, Asn-447, Tyr-449, and Asp-451. 2 disulfides stabilise this stretch: Cys-491–Cys-502 and Cys-508–Cys-565. An N-linked (GlcNAc...) asparagine glycan is attached at Asn-615. 2 cysteine pairs are disulfide-bonded: Cys-626/Cys-632 and Cys-698/Cys-711. 4 N-linked (GlcNAc...) asparagine glycosylation sites follow: Asn-704, Asn-835, Asn-851, and Asn-869. Cystine bridges form between Cys-852/Cys-910 and Cys-900/Cys-905. N-linked (GlcNAc...) asparagine glycosylation is found at Asn-941, Asn-969, and Asn-976. A helical transmembrane segment spans residues 989 to 1012 (PVWVIILAVLAGLLLLAVLVFVMY). At 1013-1044 (RMGFFKRVRPPQEEQEREQLQPHENGEGNSET) the chain is on the cytoplasmic side. Residues 1015–1019 (GFFKR) carry the GFFKR motif motif. Basic and acidic residues predominate over residues 1023 to 1038 (PQEEQEREQLQPHENG). The tract at residues 1023 to 1044 (PQEEQEREQLQPHENGEGNSET) is disordered.

Belongs to the integrin alpha chain family. Heterodimer of an alpha and a beta subunit. The alpha subunit is composed of a heavy and a light chain linked by a disulfide bond. Alpha-V (ITGAV) associates with either beta-1 (ITGB1), beta-3 (ITGB3), beta-5 (ITGB5), beta-6 (ITGB6) or beta-8 (ITGB8). Interacts with RAB25. Interacts with CIB1. Integrins ITGAV:ITGB3 and ITGAV:ITGB5 interact with FBLN5 (via N-terminus). ITGAV:ITGB3 and ITGAV:ITGB5 interact with CCN3. ITGAV:ITGB3 interacts with ADGRA2. ITGAV:ITGB3 interacts with FGF2; it is likely that FGF2 can simultaneously bind ITGAV:ITGB3 and FGF receptors. ITGAV:ITGB3 interacts with SELP (via C-type lectin domain); the interaction mediates cell-cell interaction and adhesion. ITGAV:ITGB3 is found in a ternary complex with CX3CR1 and CX3CL1. ITGAV:ITGB3 is found in a ternary complex with NRG1 and ERBB3. ITGAV:ITGB3 is found in a ternary complex with FGF1 and FGFR1. ITGAV:ITGB3 is found in a ternary complex with IGF1 and IGF1R. ITGAV:ITGB3 interacts with IGF2. ITGAV:ITGB3 and ITGAV:ITGB6 interact with FBN1. ITGAV:ITGB3 interacts with CD9, CD81 and CD151 (via second extracellular domain). ITGAV:ITGB6 interacts with TGFB1. ITGAV:ITGB3 interacts with PTN. Forms a complex with PTPRZ1 and PTN that stimulates endothelial cell migration through ITGB3 'Tyr-773' phosphorylation. Interacts with TM4SF19.

It localises to the cell membrane. Its subcellular location is the cell junction. It is found in the focal adhesion. In terms of biological role, the alpha-V (ITGAV) integrins are receptors for vitronectin, cytotactin, fibronectin, fibrinogen, laminin, matrix metalloproteinase-2, osteopontin, osteomodulin, prothrombin, thrombospondin, TGFB1 and vWF. They recognize the sequence R-G-D in a wide array of ligands. Alpha-V integrins may play a role in embryo implantation, angiogenesis and wound healing. ITGAV:ITGB3 binds to fractalkine (CX3CL1) and may act as its coreceptor in CX3CR1-dependent fractalkine signaling. ITGAV:ITGB3 binds to NRG1 (via EGF domain) and this binding is essential for NRG1-ERBB signaling. ITGAV:ITGB3 binds to FGF1 and this binding is essential for FGF1 signaling. ITGAV:ITGB3 binds to FGF2 and this binding is essential for FGF2 signaling. ITGAV:ITGB3 binds to IGF1 and this binding is essential for IGF1 signaling. ITGAV:ITGB3 binds to IGF2 and this binding is essential for IGF2 signaling. ITGAV:ITGB3 binds to IL1B and this binding is essential for IL1B signaling. ITGAV:ITGB3 binds to PLA2G2A via a site (site 2) which is distinct from the classical ligand-binding site (site 1) and this induces integrin conformational changes and enhanced ligand binding to site 1. ITGAV:ITGB3 and ITGAV:ITGB6 act as a receptor for fibrillin-1 (FBN1) and mediate R-G-D-dependent cell adhesion to FBN1. Integrin alpha-V/beta-6 or alpha-V/beta-8 (ITGAV:ITGB6 or ITGAV:ITGB8) mediates R-G-D-dependent release of transforming growth factor beta-1 (TGF-beta-1) from regulatory Latency-associated peptide (LAP), thereby playing a key role in TGF-beta-1 activation. ITGAV:ITGB3 acts as a receptor for CD40LG. ITGAV:ITGB3 binds to the Lilrb4a/Gp49b receptor and enhances the Lilrb4a-mediated inhibition of mast cell activation. ITGAV:ITGB3 also suppresses marginal zone B cell antibody production through its interaction with Lilrb4a. ITGAV:ITGB3 acts as a receptor for IBSP and promotes cell adhesion and migration to IBSP. This Mus musculus (Mouse) protein is Integrin alpha-V (Itgav).